Consider the following 639-residue polypeptide: Probable serine/threonine-protein kinase DDB_G0282777 (639 aa).

Residues 7 to 122 (LKENKESLKD…EDLKSIILTS (116 aa)) adopt a coiled-coil conformation. In terms of domain architecture, Protein kinase spans 233–588 (MHMVGDIKKG…SNNNQNHTNI (356 aa)). ATP contacts are provided by residues 239–247 (IKKGSISSD) and Lys-284. The active-site Proton acceptor is Asp-439. Residues 601 to 639 (NTLETSTTNPNTNTTTSDTNTSTTSTTNTNTTTSNTITA) form a disordered region.

The protein belongs to the protein kinase superfamily. Ser/Thr protein kinase family.

It catalyses the reaction L-seryl-[protein] + ATP = O-phospho-L-seryl-[protein] + ADP + H(+). The catalysed reaction is L-threonyl-[protein] + ATP = O-phospho-L-threonyl-[protein] + ADP + H(+). This is Probable serine/threonine-protein kinase DDB_G0282777 from Dictyostelium discoideum (Social amoeba).